The sequence spans 2206 residues: Genome polyprotein (2206 aa).

Residue glycine 2 is the site of N-myristoyl glycine; by host attachment. The Cytoplasmic portion of the chain corresponds to 2–1517; the sequence is GAQVSSQKVG…NINRAMTILQ (1516 aa). Amphipathic alpha-helix regions lie at residues 579 to 599 and 579 to 603; these read GVDD…LPKP and GVDD…QSNL. Residues histidine 898 and aspartate 916 each act as for protease 2A activity in the active site. 2 residues coordinate Zn(2+): cysteine 933 and cysteine 935. Catalysis depends on cysteine 987, which acts as the For protease 2A activity. 2 residues coordinate Zn(2+): cysteine 993 and histidine 995. The segment at 1125–1197 is membrane-binding; it reads GDSWLKKFTE…HQSCPSQEHQ (73 aa). The segment at 1125–1263 is oligomerization; sequence GDSWLKKFTE…SPGTGKSVAT (139 aa). The interval 1146–1150 is RNA-binding; it reads SNKIS. The 157-residue stretch at 1229 to 1385 folds into the SF3 helicase domain; it reads EHTINNYIQF…SEYSRDGKLN (157 aa). Residue 1253 to 1260 participates in ATP binding; sequence GSPGTGKS. The Zn(2+) site is built by cysteine 1393, cysteine 1396, cysteine 1405, and cysteine 1410. Residues 1393–1410 form a C4-type zinc finger; the sequence is CKNCHQPANFKRCCPLVC. The tract at residues 1437–1444 is RNA-binding; sequence EKNRRSNI. Residues 1448-1453 are oligomerization; it reads MEALFQ. The stretch at 1518-1533 is an intramembrane region; it reads AVTTFAAVAGVVYVMY. Residues 1534 to 2206 are Cytoplasmic-facing; that stretch reads KLFAGHQGAY…TLYRRWLDSF (673 aa). An O-(5'-phospho-RNA)-tyrosine modification is found at tyrosine 1543. The 179-residue stretch at 1563 to 1741 folds into the Peptidase C3 domain; the sequence is GPGFDYAVAM…FAAALKRSYF (179 aa). Active-site for protease 3C activity residues include histidine 1602, glutamate 1633, and cysteine 1709. The RdRp catalytic domain occupies 1972–2087; sequence EKLFAFDYTG…SYPHEVDASL (116 aa). The Mg(2+) site is built by aspartate 1978 and aspartate 2073.

It belongs to the picornaviruses polyprotein family. As to quaternary structure, interacts with capsid protein VP1 and capsid protein VP3 to form heterotrimeric protomers. Interacts with capsid protein VP0, and capsid protein VP3 to form heterotrimeric protomers. Interacts with human PVR. Five protomers subsequently associate to form pentamers which serve as building blocks for the capsid. Interacts with capsid protein VP2, capsid protein VP3 and capsid protein VP4 following cleavage of capsid protein VP0. In terms of assembly, interacts with capsid protein VP1 and capsid protein VP3 in the mature capsid. As to quaternary structure, interacts with capsid protein VP0 and capsid protein VP1 to form heterotrimeric protomers. Five protomers subsequently associate to form pentamers which serve as building blocks for the capsid. Interacts with capsid protein VP4 in the mature capsid. Interacts with protein 2C; this interaction may be important for virion morphogenesis. Interacts with capsid protein VP1 and capsid protein VP3. In terms of assembly, homodimer. As to quaternary structure, homohexamer; forms a hexameric ring structure with 6-fold symmetry characteristic of AAA+ ATPases. Interacts (via N-terminus) with host RTN3 (via reticulon domain); this interaction is important for viral replication. Interacts with capsid protein VP3; this interaction may be important for virion morphogenesis. Interacts with protein 3CD. In terms of assembly, homodimer. Interacts with host GBF1. Interacts (via GOLD domain) with host ACBD3 (via GOLD domain); this interaction allows the formation of a viral protein 3A/ACBD3 heterotetramer with a 2:2 stoichiometry, which will stimulate the recruitment of host PI4KB in order to synthesize PI4P at the viral RNA replication sites. As to quaternary structure, interacts with RNA-directed RNA polymerase. Interacts with protein 3AB and with RNA-directed RNA polymerase. In terms of assembly, interacts with Viral protein genome-linked and with protein 3CD. Mg(2+) is required as a cofactor. Specific enzymatic cleavages in vivo by the viral proteases yield processing intermediates and the mature proteins. In terms of processing, myristoylation is required for the formation of pentamers during virus assembly. Further assembly of 12 pentamers and a molecule of genomic RNA generates the provirion. Post-translationally, during virion maturation, immature virions are rendered infectious following cleavage of VP0 into VP4 and VP2. This maturation seems to be an autocatalytic event triggered by the presence of RNA in the capsid and it is followed by a conformational change infectious virion. Myristoylation is required during RNA encapsidation and formation of the mature virus particle. In terms of processing, VPg is uridylylated by the polymerase into VPg-pUpU. This acts as a nucleotide-peptide primer for the genomic RNA replication.

The protein localises to the virion. The protein resides in the host cytoplasm. It localises to the host cytoplasmic vesicle membrane. It is found in the host nucleus. The catalysed reaction is a ribonucleoside 5'-triphosphate + H2O = a ribonucleoside 5'-diphosphate + phosphate + H(+). The enzyme catalyses Selective cleavage of Tyr-|-Gly bond in the picornavirus polyprotein.. It catalyses the reaction RNA(n) + a ribonucleoside 5'-triphosphate = RNA(n+1) + diphosphate. It carries out the reaction Selective cleavage of Gln-|-Gly bond in the poliovirus polyprotein. In other picornavirus reactions Glu may be substituted for Gln, and Ser or Thr for Gly.. Its activity is regulated as follows. Replication or transcription is subject to high level of random mutations by the nucleotide analog ribavirin. Functionally, forms an icosahedral capsid of pseudo T=3 symmetry with capsid proteins VP2 and VP3. The capsid is 300 Angstroms in diameter, composed of 60 copies of each capsid protein and enclosing the viral positive strand RNA genome. Capsid protein VP1 mainly forms the vertices of the capsid. Capsid protein VP1 interacts with host cell receptor PVR to provide virion attachment to target host cells. This attachment induces virion internalization predominantly through clathrin- and caveolin-independent endocytosis in Hela cells and through caveolin-mediated endocytosis in brain microvascular endothelial cells. Tyrosine kinases are probably involved in the entry process. Virus binding to PVR induces increased junctional permeability and rearrangement of junctional proteins. Modulation of endothelial tight junctions, as well as cytolytic infection of endothelial cells themselves, may result in loss of endothelial integrity which may help the virus to reach the CNS. After binding to its receptor, the capsid undergoes conformational changes. Capsid protein VP1 N-terminus (that contains an amphipathic alpha-helix) and capsid protein VP4 are externalized. Together, they shape a pore in the host membrane through which viral genome is translocated to host cell cytoplasm. Its function is as follows. Forms an icosahedral capsid of pseudo T=3 symmetry with capsid proteins VP2 and VP3. The capsid is 300 Angstroms in diameter, composed of 60 copies of each capsid protein and enclosing the viral positive strand RNA genome. In terms of biological role, lies on the inner surface of the capsid shell. After binding to the host receptor, the capsid undergoes conformational changes. Capsid protein VP4 is released, Capsid protein VP1 N-terminus is externalized, and together, they shape a pore in the host membrane through which the viral genome is translocated into the host cell cytoplasm. Component of immature procapsids, which is cleaved into capsid proteins VP4 and VP2 after maturation. Allows the capsid to remain inactive before the maturation step. Functionally, cysteine protease that cleaves viral polyprotein and specific host proteins. It is responsible for the autocatalytic cleavage between the P1 and P2 regions, which is the first cleavage occurring in the polyprotein. Also cleaves the host translation initiation factor EIF4G1, in order to shut down the capped cellular mRNA translation. Inhibits the host nucleus-cytoplasm protein and RNA trafficking by cleaving host members of the nuclear pores including NUP98, NUP62 and NUP153. Counteracts stress granule formation probably by antagonizing its assembly or promoting its dissassembly. Cleaves and inhibits host IFIH1/MDA5, thereby inhibiting the type-I IFN production and the establishment of the antiviral state. Cleaves and inhibits host MAVS, thereby inhibiting the type-I IFN production and the establishment of the antiviral state. Its function is as follows. Plays an essential role in the virus replication cycle by acting as a viroporin. Creates a pore in the host endoplasmic reticulum and as a consequence releases Ca2+ in the cytoplasm of infected cell. In turn, high levels of cytoplasmic calcium may trigger membrane trafficking and transport of viral ER-associated proteins to viroplasms, sites of viral genome replication. In terms of biological role, induces and associates with structural rearrangements of intracellular membranes. Displays RNA-binding, nucleotide binding and NTPase activities. May play a role in virion morphogenesis and viral RNA encapsidation by interacting with the capsid protein VP3. Localizes the viral replication complex to the surface of membranous vesicles. Together with protein 3CD binds the Cis-Active RNA Element (CRE) which is involved in RNA synthesis initiation. Acts as a cofactor to stimulate the activity of 3D polymerase, maybe through a nucleid acid chaperone activity. Functionally, localizes the viral replication complex to the surface of membranous vesicles. It inhibits host cell endoplasmic reticulum-to-Golgi apparatus transport and causes the disassembly of the Golgi complex, possibly through GBF1 interaction. This would result in depletion of MHC, trail receptors and IFN receptors at the host cell surface. Plays an essential role in viral RNA replication by recruiting ACBD3 and PI4KB at the viral replication sites, thereby allowing the formation of the rearranged membranous structures where viral replication takes place. Its function is as follows. Acts as a primer for viral RNA replication and remains covalently bound to viral genomic RNA. VPg is uridylylated prior to priming replication into VPg-pUpU. The oriI viral genomic sequence may act as a template for this. The VPg-pUpU is then used as primer on the genomic RNA poly(A) by the RNA-dependent RNA polymerase to replicate the viral genome. During genome replication, the VPg-RNA linkage is removed by the host TDP2, thereby accelerating replication. During the late stage of the replication cycle, host TDP2 is excluded from sites of viral RNA synthesis and encapsidation, allowing for the generation of progeny virions. In terms of biological role, involved in the viral replication complex and viral polypeptide maturation. It exhibits protease activity with a specificity and catalytic efficiency that is different from protease 3C. Protein 3CD lacks polymerase activity. Protein 3CD binds to the 5'UTR of the viral genome. Major viral protease that mediates proteolytic processing of the polyprotein. Cleaves host EIF5B, contributing to host translation shutoff. Also cleaves host PABPC1, contributing to host translation shutoff. Cleaves host RIGI and thus contributes to the inhibition of type I interferon production. Cleaves host NLRP1, triggers host N-glycine-mediated degradation of the autoinhibitory NLRP1 N-terminal fragment. Inhibits the integrated stress response (ISR) in the infected cell by cleaving host G3BP1. Stress granule formation is thus inhibited, which allows protein synthesis and viral replication. Functionally, replicates the viral genomic RNA on the surface of intracellular membranes. May form linear arrays of subunits that propagate along a strong head-to-tail interaction called interface-I. Covalently attaches UMP to a tyrosine of VPg, which is used to prime RNA synthesis. The positive stranded RNA genome is first replicated at virus induced membranous vesicles, creating a dsRNA genomic replication form. This dsRNA is then used as template to synthesize positive stranded RNA genomes. ss(+)RNA genomes are either translated, replicated or encapsidated. This is Genome polyprotein from Poliovirus type 3 (strain 23127).